The primary structure comprises 212 residues: Large ribosomal subunit protein uL3 (212 aa).

Position 152 is an N5-methylglutamine (Gln-152).

This sequence belongs to the universal ribosomal protein uL3 family. In terms of assembly, part of the 50S ribosomal subunit. Forms a cluster with proteins L14 and L19. Methylated by PrmB.

In terms of biological role, one of the primary rRNA binding proteins, it binds directly near the 3'-end of the 23S rRNA, where it nucleates assembly of the 50S subunit. This Marinomonas sp. (strain MWYL1) protein is Large ribosomal subunit protein uL3.